The chain runs to 140 residues: MAKKVVTNIKLQVPAGQANPSPPIGPALGQHGVNIMEFCKAFNARTQGQEGMIIPVVITVYADRSFTFITKTPPAAVLLKKTAQIAKGSNEPNRTKVAKVTRAQVEEIAKLKMPDLNARDLDAAVLTIMGTARSMGIEVE.

The protein belongs to the universal ribosomal protein uL11 family. As to quaternary structure, part of the ribosomal stalk of the 50S ribosomal subunit. Interacts with L10 and the large rRNA to form the base of the stalk. L10 forms an elongated spine to which L12 dimers bind in a sequential fashion forming a multimeric L10(L12)X complex. In terms of processing, one or more lysine residues are methylated.

Functionally, forms part of the ribosomal stalk which helps the ribosome interact with GTP-bound translation factors. In Syntrophobacter fumaroxidans (strain DSM 10017 / MPOB), this protein is Large ribosomal subunit protein uL11.